The primary structure comprises 1555 residues: Glycogen debranching enzyme (1555 aa).

At Ser87 the chain carries Phosphoserine. Residues Asp549, His552, and Asp650 contribute to the active site.

This sequence belongs to the glycogen debranching enzyme family. As to quaternary structure, monomer. Interacts with NHLRC1/malin. The N-terminus is blocked. In terms of processing, ubiquitinated.

The protein localises to the cytoplasm. It carries out the reaction Transfers a segment of a (1-&gt;4)-alpha-D-glucan to a new position in an acceptor, which may be glucose or a (1-&gt;4)-alpha-D-glucan.. It catalyses the reaction Hydrolysis of (1-&gt;6)-alpha-D-glucosidic branch linkages in glycogen phosphorylase limit dextrin.. Multifunctional enzyme acting as 1,4-alpha-D-glucan:1,4-alpha-D-glucan 4-alpha-D-glycosyltransferase and amylo-1,6-glucosidase in glycogen degradation. In Oryctolagus cuniculus (Rabbit), this protein is Glycogen debranching enzyme (AGL).